Here is a 141-residue protein sequence, read N- to C-terminus: VLSGSDKTNVKGVFGKIGGHAEEYGAETLERMFATYPQTKTYFPHFDLQHGSAQVKAHGKKVAAALVEAANHIDDIAGALSKLSDLHAQKLRVDPVNFKLLGQCFLVVVAIHHPSVLTPEVHASLDKFLCAVGNVLTAKYR.

The 141-residue stretch at 1–141 folds into the Globin domain; the sequence is VLSGSDKTNV…VGNVLTAKYR (141 aa). His58 is a binding site for O2. Residue His87 coordinates heme b.

The protein belongs to the globin family. Heterotetramer of two alpha chains and two beta chains. Red blood cells.

Functionally, involved in oxygen transport from the lung to the various peripheral tissues. The sequence is that of Hemoglobin subunit alpha-A (HBAA) from Chroicocephalus ridibundus (Black-headed gull).